The chain runs to 72 residues: Translation initiation factor IF-1 (72 aa).

An S1-like domain is found at 1–72 (MARDDVIEVD…DKGRITFRYK (72 aa)).

This sequence belongs to the IF-1 family. As to quaternary structure, component of the 30S ribosomal translation pre-initiation complex which assembles on the 30S ribosome in the order IF-2 and IF-3, IF-1 and N-formylmethionyl-tRNA(fMet); mRNA recruitment can occur at any time during PIC assembly.

It localises to the cytoplasm. Its function is as follows. One of the essential components for the initiation of protein synthesis. Stabilizes the binding of IF-2 and IF-3 on the 30S subunit to which N-formylmethionyl-tRNA(fMet) subsequently binds. Helps modulate mRNA selection, yielding the 30S pre-initiation complex (PIC). Upon addition of the 50S ribosomal subunit IF-1, IF-2 and IF-3 are released leaving the mature 70S translation initiation complex. The protein is Translation initiation factor IF-1 of Helicobacter pylori (strain HPAG1).